We begin with the raw amino-acid sequence, 149 residues long: Envelope glycoprotein UL4 (149 aa).

The signal sequence occupies residues 1–18 (MMLRTWISLPMVLLDAYC). N-linked (GlcNAc...) asparagine; by host glycans are attached at residues Asn-46, Asn-51, Asn-59, Asn-67, Asn-105, Asn-109, Asn-119, Asn-136, and Asn-145.

This sequence belongs to the RL11 family. Post-translationally, N-glycosylated and possibly O-glycosylated.

Its subcellular location is the virion membrane. The protein is Envelope glycoprotein UL4 (UL4) of Human cytomegalovirus (strain Merlin) (HHV-5).